The primary structure comprises 182 residues: Dual-action ribosomal maturation protein DarP (182 aa).

It belongs to the DarP family.

The protein resides in the cytoplasm. Its function is as follows. Member of a network of 50S ribosomal subunit biogenesis factors which assembles along the 30S-50S interface, preventing incorrect 23S rRNA structures from forming. Promotes peptidyl transferase center (PTC) maturation. This Serratia proteamaculans (strain 568) protein is Dual-action ribosomal maturation protein DarP.